A 488-amino-acid chain; its full sequence is Diacylglycerol kinase 3 (488 aa).

The segment at 1–24 is disordered; it reads MDSPVSKTDASKEKFVASRPSTAD. The DAGKc domain occupies 87 to 245; it reads APHAPMVVFI…SWKILVSMPS (159 aa).

It belongs to the eukaryotic diacylglycerol kinase family. Monomer.

It carries out the reaction a 1,2-diacyl-sn-glycerol + ATP = a 1,2-diacyl-sn-glycero-3-phosphate + ADP + H(+). In terms of biological role, phosphorylates the second messenger diacylglycerol (DAG) to generate phosphatidic acid (PA), another important signaling molecule. PA is required for plant development and responses to abiotic stress and pathogen attack. May be involved in the accumulation of PA during cold stress. The polypeptide is Diacylglycerol kinase 3 (DGK3) (Arabidopsis thaliana (Mouse-ear cress)).